The chain runs to 162 residues: MRLTSKGRYAVTAMLDVALNSESGPVPLADISERQGISLSYLEQLFSRLRKNGLVASVRGPGGGYLLGKDAGQIAVGEVISAVDESVDATRCQGKGGCQGGDKCLTHALWRDLSDRLTGFLNNITLGELVNNQEVLDVSDRQHNEAHRPTRAQDAIDVKLRA.

The HTH rrf2-type domain maps to 2–131 (RLTSKGRYAV…NNITLGELVN (130 aa)). The H-T-H motif DNA-binding region spans 28–51 (LADISERQGISLSYLEQLFSRLRK). 3 residues coordinate [2Fe-2S] cluster: Cys-92, Cys-98, and Cys-104. The tract at residues 141–162 (RQHNEAHRPTRAQDAIDVKLRA) is disordered.

[2Fe-2S] cluster serves as cofactor.

In terms of biological role, regulates the transcription of several operons and genes involved in the biogenesis of Fe-S clusters and Fe-S-containing proteins. The sequence is that of HTH-type transcriptional regulator IscR from Cronobacter sakazakii (strain ATCC BAA-894) (Enterobacter sakazakii).